The following is a 356-amino-acid chain: Holliday junction branch migration complex subunit RuvB (356 aa).

The segment at 13-197 (LPPARRMLSA…FGIVARLEFY (185 aa)) is large ATPase domain (RuvB-L). ATP-binding positions include L36, R37, G78, K81, T82, T83, 144-146 (EDY), R187, Y197, and R234. T82 lines the Mg(2+) pocket. The segment at 198–268 (TPEELARIVK…IANRALAMLD (71 aa)) is small ATPAse domain (RuvB-S). Residues 271-356 (PQGFDLMDRK…RGNAENLFEE (86 aa)) form a head domain (RuvB-H) region. 2 residues coordinate DNA: R326 and R331.

It belongs to the RuvB family. In terms of assembly, homohexamer. Forms an RuvA(8)-RuvB(12)-Holliday junction (HJ) complex. HJ DNA is sandwiched between 2 RuvA tetramers; dsDNA enters through RuvA and exits via RuvB. An RuvB hexamer assembles on each DNA strand where it exits the tetramer. Each RuvB hexamer is contacted by two RuvA subunits (via domain III) on 2 adjacent RuvB subunits; this complex drives branch migration. In the full resolvosome a probable DNA-RuvA(4)-RuvB(12)-RuvC(2) complex forms which resolves the HJ.

It localises to the cytoplasm. The enzyme catalyses ATP + H2O = ADP + phosphate + H(+). The RuvA-RuvB-RuvC complex processes Holliday junction (HJ) DNA during genetic recombination and DNA repair, while the RuvA-RuvB complex plays an important role in the rescue of blocked DNA replication forks via replication fork reversal (RFR). RuvA specifically binds to HJ cruciform DNA, conferring on it an open structure. The RuvB hexamer acts as an ATP-dependent pump, pulling dsDNA into and through the RuvAB complex. RuvB forms 2 homohexamers on either side of HJ DNA bound by 1 or 2 RuvA tetramers; 4 subunits per hexamer contact DNA at a time. Coordinated motions by a converter formed by DNA-disengaged RuvB subunits stimulates ATP hydrolysis and nucleotide exchange. Immobilization of the converter enables RuvB to convert the ATP-contained energy into a lever motion, pulling 2 nucleotides of DNA out of the RuvA tetramer per ATP hydrolyzed, thus driving DNA branch migration. The RuvB motors rotate together with the DNA substrate, which together with the progressing nucleotide cycle form the mechanistic basis for DNA recombination by continuous HJ branch migration. Branch migration allows RuvC to scan DNA until it finds its consensus sequence, where it cleaves and resolves cruciform DNA. In Polaromonas naphthalenivorans (strain CJ2), this protein is Holliday junction branch migration complex subunit RuvB.